A 297-amino-acid polypeptide reads, in one-letter code: Carboxysome assembly protein CcmO (297 aa).

The segment at 1-29 (MPTSPTMTSVPIARSPRPSYQQINQHQPS) is disordered. The span at 18–29 (PSYQQINQHQPS) shows a compositional bias: polar residues. BMC domains are found at residues 32–116 (ALGL…AVFP) and 138–222 (SIGL…HTLP).

Belongs to the bacterial microcompartments protein family. As to quaternary structure, homooligomerizes, possibly as a trimer, interacts with CcmK in the carboxysome.

The protein resides in the carboxysome. Required for formation of the carboxysome, a polyhedral inclusion where RuBisCO (ribulose bisphosphate carboxylase, rbcL-rbcS) is sequestered. Required for recruitment of major shell protein CcmK2 to the pre-carboxysome. Suggested to be a carboxysome shell protein. In Synechocystis sp. (strain ATCC 27184 / PCC 6803 / Kazusa), this protein is Carboxysome assembly protein CcmO.